The following is a 258-amino-acid chain: 5'-nucleotidase SurE (258 aa).

4 residues coordinate a divalent metal cation: Asp9, Asp10, Ser40, and Asn95.

This sequence belongs to the SurE nucleotidase family. A divalent metal cation serves as cofactor.

Its subcellular location is the cytoplasm. The enzyme catalyses a ribonucleoside 5'-phosphate + H2O = a ribonucleoside + phosphate. In terms of biological role, nucleotidase that shows phosphatase activity on nucleoside 5'-monophosphates. The sequence is that of 5'-nucleotidase SurE from Nitratiruptor sp. (strain SB155-2).